A 148-amino-acid chain; its full sequence is Large ribosomal subunit protein uL22 (148 aa).

Belongs to the universal ribosomal protein uL22 family. In terms of assembly, part of the 50S ribosomal subunit.

This protein binds specifically to 23S rRNA. It makes multiple contacts with different domains of the 23S rRNA in the assembled 50S subunit and ribosome. In terms of biological role, the globular domain of the protein is located near the polypeptide exit tunnel on the outside of the subunit, while an extended beta-hairpin is found that lines the wall of the exit tunnel in the center of the 70S ribosome. The chain is Large ribosomal subunit protein uL22 from Thermoplasma volcanium (strain ATCC 51530 / DSM 4299 / JCM 9571 / NBRC 15438 / GSS1).